The following is a 61-amino-acid chain: Large ribosomal subunit protein bL32 (61 aa).

Positions 1–16 (MAVPKRKTSPSRRGMR) are enriched in basic residues. Positions 1–44 (MAVPKRKTSPSRRGMRRSADALKAPTYVEDKDSGELRRPHHIDL) are disordered. A compositionally biased stretch (basic and acidic residues) spans 28–44 (VEDKDSGELRRPHHIDL).

The protein belongs to the bacterial ribosomal protein bL32 family.

In Methylobacterium nodulans (strain LMG 21967 / CNCM I-2342 / ORS 2060), this protein is Large ribosomal subunit protein bL32.